The following is a 256-amino-acid chain: Trypsin CFT-1 (256 aa).

Residues 1–17 (MRVTLALVALCLASVAA) form the signal peptide. Positions 18 to 24 (LPEKQQR) are cleaved as a propeptide — activation peptide. Residues 25-256 (IVGGSVTTIE…RFTAWIQANA (232 aa)) form the Peptidase S1 domain. A disulfide bridge links C55 with C71. Residues H70 and D115 each act as charge relay system in the active site. Disulfide bonds link C180–C197 and C209–C233. Catalysis depends on S213, which acts as the Charge relay system.

Belongs to the peptidase S1 family.

The protein resides in the secreted. Its subcellular location is the extracellular space. The catalysed reaction is Preferential cleavage: Arg-|-Xaa, Lys-|-Xaa.. Its function is as follows. Responsible for the activation of delta-endotoxin from Bacillus thuringiensis. The chain is Trypsin CFT-1 from Choristoneura fumiferana (Spruce budworm moth).